The following is a 520-amino-acid chain: MHQKILILDFGSQYTQLIARRVREAGVYCELHPNDVSEDFVREFAPQGIILSGGPNSVYEDETPRAPDVVFTLGVPVLGICYGMQTMAAQLGGAVESAAKREFGYAEIRARGHTQLLRDIQDRVTGEGHGMLDVWMSHGDKVTALPEGFKLMASNAATPIAGMADEARRFYGVQFHPEVTHTLQGKHILNRFVHDICGCGSDWNMPDYVEEAIGKVRSEVGSDEVILGLSGGVDSSVVAALLHRAVGDQLTCVFVDNGLLRLNEAEQVMETFAQNLGVKVIHVDATERFMRELAGVSDPEQKRKIIGREFVHVFQEEAEKLPKAKWLAQGTIYPDVIESASAKTKKAHTIKSHHNVGGLPETLHLQLLEPLRELFKDEVRELGIALGLPHDMVYRHPFPGPGLGVRILGKVKREYADLLRRADAIFIEELRASGWYEKTSQAFTVFLPVKSVGVMGDGRTYDYVVALRAVQTQDFMTAHWAELPYTLLGKVSNRIINEVRGINRVVYDVSGKPPATIEWE.

The Glutamine amidotransferase type-1 domain maps to 4-202 (KILILDFGSQ…VHDICGCGSD (199 aa)). Cysteine 81 (nucleophile) is an active-site residue. Catalysis depends on residues histidine 176 and glutamate 178. Residues 203 to 395 (WNMPDYVEEA…LGLPHDMVYR (193 aa)) form the GMPS ATP-PPase domain. Residue 230–236 (SGGVDSS) coordinates ATP.

In terms of assembly, homodimer.

It carries out the reaction XMP + L-glutamine + ATP + H2O = GMP + L-glutamate + AMP + diphosphate + 2 H(+). It functions in the pathway purine metabolism; GMP biosynthesis; GMP from XMP (L-Gln route): step 1/1. Functionally, catalyzes the synthesis of GMP from XMP. The polypeptide is GMP synthase [glutamine-hydrolyzing] (Thiobacillus denitrificans (strain ATCC 25259 / T1)).